A 184-amino-acid polypeptide reads, in one-letter code: NADH-quinone oxidoreductase subunit B (184 aa).

Positions 37, 38, 103, and 132 each coordinate [4Fe-4S] cluster.

The protein belongs to the complex I 20 kDa subunit family. NDH-1 is composed of 14 different subunits. Subunits NuoB, C, D, E, F, and G constitute the peripheral sector of the complex. [4Fe-4S] cluster is required as a cofactor.

The protein resides in the cell membrane. The enzyme catalyses a quinone + NADH + 5 H(+)(in) = a quinol + NAD(+) + 4 H(+)(out). Its function is as follows. NDH-1 shuttles electrons from NADH, via FMN and iron-sulfur (Fe-S) centers, to quinones in the respiratory chain. The immediate electron acceptor for the enzyme in this species is believed to be a menaquinone. Couples the redox reaction to proton translocation (for every two electrons transferred, four hydrogen ions are translocated across the cytoplasmic membrane), and thus conserves the redox energy in a proton gradient. The protein is NADH-quinone oxidoreductase subunit B of Mycolicibacterium paratuberculosis (strain ATCC BAA-968 / K-10) (Mycobacterium paratuberculosis).